A 254-amino-acid polypeptide reads, in one-letter code: Homeobox protein Nkx-6.3 (254 aa).

2 disordered regions span residues 112–140 (QDWRGGNPALSSASNTEGSSRKKHTRPTF) and 191–228 (KSAVETPGLPSLSTRAPGDLIPSDNEDDEYSKPLDPDS). Over residues 120–129 (ALSSASNTEG) the composition is skewed to polar residues. The segment at residues 133 to 192 (KKHTRPTFTGHQIFALEKTFEQTKYLAGPERARLAFSLGMSESQVKVWFQNRRTKWRKKS) is a DNA-binding region (homeobox).

Its subcellular location is the nucleus. Its function is as follows. Putative transcription factor, which may be involved in patterning of central nervous system and pancreas. The polypeptide is Homeobox protein Nkx-6.3 (nkx6-3) (Xenopus laevis (African clawed frog)).